We begin with the raw amino-acid sequence, 602 residues long: Sodium-independent sulfate anion transporter (602 aa).

The Extracellular portion of the chain corresponds to 1–47; it reads MSPPMSPMKPPKGFAPMSCCWSTETMQKWLPFLGWLPDYTWYALKMD. Residues 48–68 traverse the membrane as a helical segment; that stretch reads FIAGISVGLTVIPQALAYAEV. Ala-69 is a topological domain (cytoplasmic). The chain crosses the membrane as a helical span at residues 70 to 90; the sequence is GLPPQYGLYSAFMGCFVYFFL. Residues 91 to 115 are Extracellular-facing; the sequence is GTSRDVTLGPTAIMSLLVSFYTFHE. The chain crosses the membrane as a helical span at residues 116–136; that stretch reads PAYAVLLAFLTGCIQLGMGFL. The Cytoplasmic segment spans residues 137–143; that stretch reads RLGLLLD. Residues 144-164 form a helical membrane-spanning segment; sequence FISCPVIKGFTSAAAIIIGFG. Topologically, residues 165-193 are extracellular; that stretch reads QIKNLLGLQHIPRQFFLQVYYTFHNIGET. A helical transmembrane segment spans residues 194–214; sequence RVGDAVLGLVCMVLLLVLKLM. Topologically, residues 215–246 are cytoplasmic; it reads RDHVPPVHPEMPTGVRLSHGLVWTATTARNAL. The helical transmembrane segment at 247–267 threads the bilayer; that stretch reads VVSFAALVAYSFQVTGYQPFV. The Extracellular portion of the chain corresponds to 268 to 300; it reads LTGKTPEGLPDAHIPPFSVTTANGTISFTEMVQ. A helical membrane pass occupies residues 301-321; that stretch reads GMGAGLVVVPLMGLLESIAVA. Residues 322–337 are Cytoplasmic-facing; it reads KSFASQNNYRINSNQE. Residues 338–358 form a helical membrane-spanning segment; that stretch reads LLALGFTNILGSLFSSYPVTG. The Extracellular segment spans residues 359 to 370; sequence SFGRTAVNAQSG. A helical membrane pass occupies residues 371 to 391; sequence VCTPAGGLMTGALVLLSLDYL. Residues 392–394 are Cytoplasmic-facing; the sequence is TSL. A helical transmembrane segment spans residues 395 to 415; it reads FYYIPKSALAAVIIMAVVPLF. Over 416 to 438 the chain is Extracellular; it reads DTKIVKTLWRVKRLDLLPLCVTF. A helical membrane pass occupies residues 439-459; it reads LLCFWEVQYGILAGTLVSVLI. The Cytoplasmic segment spans residues 460–602; that stretch reads LLHSVARPKI…PEHKIALLKA (143 aa). In terms of domain architecture, STAS spans 466–580; that stretch reads RPKIQVSEGP…EAEKYLKQEP (115 aa).

Belongs to the SLC26A/SulP transporter (TC 2.A.53) family.

Its subcellular location is the cell membrane. The protein resides in the lysosome membrane. It is found in the apical cell membrane. It localises to the basolateral cell membrane. The enzyme catalyses hydrogencarbonate(in) + chloride(out) = hydrogencarbonate(out) + chloride(in). It carries out the reaction sulfate(in) + H(+)(in) = sulfate(out) + H(+)(out). The catalysed reaction is oxalate(in) + chloride(out) = oxalate(out) + chloride(in). In terms of biological role, sodium-independent anion exchanger mediating bicarbonate, chloride, sulfate and oxalate transport. Exhibits sodium-independent sulfate anion transporter activity that may cooperate with SLC26A2 to mediate DIDS-sensitive sulfate uptake into high endothelial venules endothelial cells (HEVEC). In the kidney, mediates chloride-bicarbonate exchange, facilitating V-ATPase-mediated acid secretion. May function as a chloride channel, playing an important role in moderating chloride homeostasis and neuronal activity in the cerebellum. In Bos taurus (Bovine), this protein is Sodium-independent sulfate anion transporter.